We begin with the raw amino-acid sequence, 86 residues long: MVHICRLLVLMGMLLCLSAQFASSQHWSHGWYPGGKREIDIYDTSEVSGEIKLCEAGKCSYLRPQGRNILKTILLDALIRDFQKRK.

Positions Met-1 to Ser-24 are cleaved as a signal peptide. Position 25 is a pyrrolidone carboxylic acid (Gln-25). Position 34 is a glycine amide (Gly-34).

Belongs to the GnRH family.

It localises to the secreted. Stimulates the secretion of gonadotropins. The polypeptide is Progonadoliberin-2 (gnrh2) (Rutilus rutilus (Roach)).